Consider the following 362-residue polypeptide: Phenylalanine--tRNA ligase alpha subunit (362 aa).

Residue Glu-263 coordinates Mg(2+).

The protein belongs to the class-II aminoacyl-tRNA synthetase family. Phe-tRNA synthetase alpha subunit type 1 subfamily. As to quaternary structure, tetramer of two alpha and two beta subunits. It depends on Mg(2+) as a cofactor.

The protein localises to the cytoplasm. It carries out the reaction tRNA(Phe) + L-phenylalanine + ATP = L-phenylalanyl-tRNA(Phe) + AMP + diphosphate + H(+). This Caulobacter sp. (strain K31) protein is Phenylalanine--tRNA ligase alpha subunit.